Consider the following 114-residue polypeptide: Class I hydrophobin 1 (114 aa).

Positions 1–20 (MQFTKMSAFATLALATLAAA) are cleaved as a signal peptide. 4 disulfide bridges follow: Cys-33-Cys-93, Cys-40-Cys-87, Cys-41-Cys-74, and Cys-94-Cys-107.

The protein belongs to the fungal hydrophobin family. Self-assembles to form functional amyloid fibrils called rodlets. Self-assembly into fibrillar rodlets occurs spontaneously at hydrophobic:hydrophilic interfaces and the rodlets further associate laterally to form amphipathic monolayers.

It is found in the secreted. The protein localises to the cell wall. Its function is as follows. Aerial growth, conidiation, and dispersal of filamentous fungi in the environment rely upon a capability of their secreting small amphipathic proteins called hydrophobins (HPBs) with low sequence identity. Class I can self-assemble into an outermost layer of rodlet bundles on aerial cell surfaces, conferring cellular hydrophobicity that supports fungal growth, development and dispersal; whereas Class II form highly ordered films at water-air interfaces through intermolecular interactions but contribute nothing to the rodlet structure. Pnh1 is a class I hydrophobin that might be involved in the attachment of the hydrophilic wall of hyphae to the hydrophobic surface of wood under inorganic phosphate (Pi)-deficient conditions and enable the mycelium to degrade efficiently the components of wood and to acquire nutrients containing Pi. This Pholiota nameko protein is Class I hydrophobin 1.